The primary structure comprises 152 residues: Deoxyuridine 5'-triphosphate nucleotidohydrolase (152 aa).

Substrate contacts are provided by residues 72 to 74, Asn85, and 89 to 91; these read RSG and TID.

This sequence belongs to the dUTPase family. The cofactor is Mg(2+).

The enzyme catalyses dUTP + H2O = dUMP + diphosphate + H(+). Its pathway is pyrimidine metabolism; dUMP biosynthesis; dUMP from dCTP (dUTP route): step 2/2. In terms of biological role, this enzyme is involved in nucleotide metabolism: it produces dUMP, the immediate precursor of thymidine nucleotides and it decreases the intracellular concentration of dUTP so that uracil cannot be incorporated into DNA. In Afipia carboxidovorans (strain ATCC 49405 / DSM 1227 / KCTC 32145 / OM5) (Oligotropha carboxidovorans), this protein is Deoxyuridine 5'-triphosphate nucleotidohydrolase.